A 349-amino-acid polypeptide reads, in one-letter code: Probable dual-specificity RNA methyltransferase RlmN (349 aa).

Glu-94 acts as the Proton acceptor in catalysis. The 225-residue stretch at 100–324 (YKTHTSICLS…NKNNVNTTIR (225 aa)) folds into the Radical SAM core domain. A disulfide bridge connects residues Cys-107 and Cys-335. [4Fe-4S] cluster is bound by residues Cys-114, Cys-118, and Cys-121. S-adenosyl-L-methionine is bound by residues 161–162 (GE), Ser-193, 216–218 (SLH), and Asn-292. The S-methylcysteine intermediate role is filled by Cys-335.

The protein belongs to the radical SAM superfamily. RlmN family. [4Fe-4S] cluster is required as a cofactor.

The protein localises to the cytoplasm. The catalysed reaction is adenosine(2503) in 23S rRNA + 2 reduced [2Fe-2S]-[ferredoxin] + 2 S-adenosyl-L-methionine = 2-methyladenosine(2503) in 23S rRNA + 5'-deoxyadenosine + L-methionine + 2 oxidized [2Fe-2S]-[ferredoxin] + S-adenosyl-L-homocysteine. It catalyses the reaction adenosine(37) in tRNA + 2 reduced [2Fe-2S]-[ferredoxin] + 2 S-adenosyl-L-methionine = 2-methyladenosine(37) in tRNA + 5'-deoxyadenosine + L-methionine + 2 oxidized [2Fe-2S]-[ferredoxin] + S-adenosyl-L-homocysteine. Functionally, specifically methylates position 2 of adenine 2503 in 23S rRNA and position 2 of adenine 37 in tRNAs. This chain is Probable dual-specificity RNA methyltransferase RlmN, found in Finegoldia magna (strain ATCC 29328 / DSM 20472 / WAL 2508) (Peptostreptococcus magnus).